The primary structure comprises 400 residues: Flavo-diiron protein FprA2 (400 aa).

A zinc metallo-hydrolase region spans residues 32–216; the sequence is GTSYNAYLIK…VVKGLDILDA (185 aa). Fe cation is bound by residues histidine 79, glutamate 81, aspartate 83, histidine 147, aspartate 166, and histidine 226. Residues 257-397 enclose the Flavodoxin-like domain; the sequence is IPIFYCSAYG…KAFKFGEDFA (141 aa). FMN-binding positions include 263 to 267 and 345 to 372; these read SAYGN and AFGS…KVFQ.

This sequence in the N-terminal section; belongs to the zinc metallo-hydrolase group 3 family. In terms of assembly, homotetramer. FMN is required as a cofactor. Fe cation serves as cofactor.

The enzyme catalyses 2 NADH + O2 + 2 H(+) = 2 NAD(+) + 2 H2O. In terms of biological role, catalyzes the four-electron reduction of molecular oxygen to water. In fact, functions as the terminal component of an NADH oxidase (NADH:O(2) oxidoreductase) when using NADH:rubredoxin oxidoreductase (NROR) and rubredoxin (Rd) as electron transport intermediaries between NADH and FDP. Is thus able to reductively scavenge intracellular dioxygen and is part of an oxidative stress defense system in C.acetobutylicum, an obligate anaerobic bacterium. Can also serve as the terminal component of an NADH:nitric oxide oxidoreductase (NOR) with a catalytic efficiency comparable to that of its NADH oxidase activity, and therefore might have an in vivo role in scavenging nitric oxide. This chain is Flavo-diiron protein FprA2 (fprA2), found in Clostridium acetobutylicum (strain ATCC 824 / DSM 792 / JCM 1419 / IAM 19013 / LMG 5710 / NBRC 13948 / NRRL B-527 / VKM B-1787 / 2291 / W).